We begin with the raw amino-acid sequence, 85 residues long: uncharacterized protein (85 aa).

S22 carries the post-translational modification Phosphoserine.

It is found in the cytoplasm. The protein localises to the nucleus. This is an uncharacterized protein from Saccharomyces cerevisiae (strain ATCC 204508 / S288c) (Baker's yeast).